A 384-amino-acid polypeptide reads, in one-letter code: Endoglucanase (384 aa).

Positions 1-25 are cleaved as a signal peptide; sequence MTRRRLLHAGTLAGVAALLPAAALA. The active-site Proton donor is Glu-63. The active-site Nucleophile is the Asp-124.

This sequence belongs to the glycosyl hydrolase 8 (cellulase D) family.

It is found in the secreted. The catalysed reaction is Endohydrolysis of (1-&gt;4)-beta-D-glucosidic linkages in cellulose, lichenin and cereal beta-D-glucans.. Its pathway is glycan metabolism; bacterial cellulose biosynthesis. Functionally, hydrolyzes carboxymethylcellulose. The polypeptide is Endoglucanase (bcsZ) (Xanthomonas axonopodis pv. citri (strain 306)).